The following is a 262-amino-acid chain: Malonyl-[acyl-carrier protein] O-methyltransferase (262 aa).

This sequence belongs to the methyltransferase superfamily.

It carries out the reaction malonyl-[ACP] + S-adenosyl-L-methionine = malonyl-[ACP] methyl ester + S-adenosyl-L-homocysteine. Its pathway is cofactor biosynthesis; biotin biosynthesis. In terms of biological role, converts the free carboxyl group of a malonyl-thioester to its methyl ester by transfer of a methyl group from S-adenosyl-L-methionine (SAM). It allows to synthesize pimeloyl-ACP via the fatty acid synthetic pathway. The protein is Malonyl-[acyl-carrier protein] O-methyltransferase of Erwinia pyrifoliae (strain DSM 12163 / CIP 106111 / Ep16/96).